Here is a 133-residue protein sequence, read N- to C-terminus: ATP synthase epsilon chain, chloroplastic (133 aa).

Belongs to the ATPase epsilon chain family. F-type ATPases have 2 components, CF(1) - the catalytic core - and CF(0) - the membrane proton channel. CF(1) has five subunits: alpha(3), beta(3), gamma(1), delta(1), epsilon(1). CF(0) has three main subunits: a, b and c.

It localises to the plastid. Its subcellular location is the chloroplast thylakoid membrane. In terms of biological role, produces ATP from ADP in the presence of a proton gradient across the membrane. In Piper cenocladum (Ant piper), this protein is ATP synthase epsilon chain, chloroplastic.